A 415-amino-acid chain; its full sequence is Gamma-glutamyl phosphate reductase (415 aa).

It belongs to the gamma-glutamyl phosphate reductase family.

The protein resides in the cytoplasm. It carries out the reaction L-glutamate 5-semialdehyde + phosphate + NADP(+) = L-glutamyl 5-phosphate + NADPH + H(+). It participates in amino-acid biosynthesis; L-proline biosynthesis; L-glutamate 5-semialdehyde from L-glutamate: step 2/2. Functionally, catalyzes the NADPH-dependent reduction of L-glutamate 5-phosphate into L-glutamate 5-semialdehyde and phosphate. The product spontaneously undergoes cyclization to form 1-pyrroline-5-carboxylate. This is Gamma-glutamyl phosphate reductase from Xylella fastidiosa (strain 9a5c).